A 445-amino-acid chain; its full sequence is Disintegrin and metalloproteinase domain-containing protein 18 (445 aa).

In terms of domain architecture, Peptidase M12B spans 1 to 106; sequence IYRKHLKYIG…LDMQCLGDLS (106 aa). Residues 1 to 409 are Extracellular-facing; the sequence is IYRKHLKYIG…TKRLSQHADS (409 aa). Intrachain disulfides connect cysteine 18/cysteine 101, cysteine 60/cysteine 85, and cysteine 62/cysteine 67. Asparagine 19 and asparagine 59 each carry an N-linked (GlcNAc...) asparagine glycan. 2 N-linked (GlcNAc...) asparagine glycosylation sites follow: asparagine 84 and asparagine 131. In terms of domain architecture, Disintegrin spans 113–202; sequence QSVCGNGIVE…HCVPDTFALD (90 aa). Cysteine 173 and cysteine 194 are oxidised to a cystine. Asparagine 333 and asparagine 340 each carry an N-linked (GlcNAc...) asparagine glycan. An EGF-like domain is found at 342–376; that stretch reads TGNDCNAAKKCKGNGICNNFGHCQCFPDYRPPDCN. Intrachain disulfides connect cysteine 346/cysteine 358, cysteine 352/cysteine 364, and cysteine 366/cysteine 375. A helical membrane pass occupies residues 410-430; that stretch reads WVILGFFIFLPFIMTLFLGII. Over 431–445 the chain is Cytoplasmic; it reads KRNERKIVPQKEQER.

In terms of processing, the prodomain and the metalloprotease-like domain are cleaved during the epididymal maturation of the spermatozoa. Expressed specifically in testis.

The protein localises to the membrane. Sperm surface membrane protein that may be involved in spermatogenesis and fertilization. This is a non catalytic metalloprotease-like protein. This Rattus norvegicus (Rat) protein is Disintegrin and metalloproteinase domain-containing protein 18 (Adam18).